We begin with the raw amino-acid sequence, 196 residues long: Sulfur-rich protein (196 aa).

The next 3 membrane-spanning stretches (helical) occupy residues 34–54 (VTAGLQAITSSPGMVNLLIGW), 76–96 (ITLLVLGILLVVAGLACMFIF), and 105–125 (FWLIIPAAIGLIKLLVTSLCF).

The protein localises to the membrane. The polypeptide is Sulfur-rich protein (srp) (Chlamydia pneumoniae (Chlamydophila pneumoniae)).